The primary structure comprises 617 residues: uncharacterized protein (617 aa).

In terms of domain architecture, B12-binding N-terminal spans 33–134 (TEDDFRGEKF…FXNATKQKGS (102 aa)). Methylcob(III)alamin-binding positions include Glu-84, 146–150 (GDVHD), His-149, Ser-194, Thr-198, and Ala-251. A B12-binding domain is found at 136–272 (NGKVVIATVK…NPEGRAALWE (137 aa)). Residues 288 to 617 (SKPLRKQLSI…MMKWLGVAMK (330 aa)) form the AdoMet activation domain. S-adenosyl-L-methionine contacts are provided by residues Asp-337, Arg-528, and 583 to 584 (YF).

This sequence belongs to the vitamin-B12 dependent methionine synthase family.

This is an uncharacterized protein from Haemophilus influenzae (strain ATCC 51907 / DSM 11121 / KW20 / Rd).